We begin with the raw amino-acid sequence, 313 residues long: Adhesin MafA 1 (313 aa).

The first 14 residues, 1 to 14, serve as a signal peptide directing secretion; it reads MKILLLLIPLVLTA. Cys-15 carries the N-palmitoyl cysteine lipid modification. Cys-15 carries the S-diacylglycerol cysteine lipid modification. Over residues 282 to 298 the composition is skewed to polar residues; the sequence is GDTTAQNRPDFKQNNGK. The disordered stretch occupies residues 282–313; sequence GDTTAQNRPDFKQNNGKNPDVGNEVIRRRKGG.

This sequence belongs to the MafA family.

Its subcellular location is the cell outer membrane. In Neisseria meningitidis serogroup C / serotype 2a (strain ATCC 700532 / DSM 15464 / FAM18), this protein is Adhesin MafA 1 (mafA1).